A 2236-amino-acid chain; its full sequence is uncharacterized protein (2236 aa).

Spectrin repeat units lie at residues 46–146 and 238–335; these read QVYL…RQLE and QKFV…TDIE. Coiled-coil stretches lie at residues 496–541 and 603–631; these read VVEQ…TVNS and DDQQ…VGRQ. Spectrin repeat units lie at residues 839–949, 1048–1146, 1261–1361, 1367–1459, and 1562–1667; these read YEYD…KTLK, KKLE…KRME, LGAE…VDLN, ILID…KSLA, and QKVV…NRLE. Residues 1835 to 1869 are a coiled coil; sequence QNSTDAEKKLSLVSERLNALKKQLDLLAEKIAVDD. 2 EF-hand domains span residues 2104–2139 and 2141–2176; these read KQLH…QGYN and SAEN…HETT. Ca(2+) is bound by residues Asp-2154, Ser-2156, Thr-2158, His-2160, and Asp-2165.

The protein belongs to the spectrin family.

This is an uncharacterized protein from Caenorhabditis elegans.